Consider the following 527-residue polypeptide: Zinc finger C2HC domain-containing protein 1C (527 aa).

Disordered regions lie at residues 18 to 105 (HNKT…GQGK) and 145 to 170 (VHRK…LPDS). A compositionally biased stretch (polar residues) spans 50 to 61 (NSFQSKLWSNTE). Over residues 71–85 (RPKRNVCTKARRHSC) the composition is skewed to basic residues. Residues 93 to 102 (QQGSGNNAQG) are compositionally biased toward low complexity. A coiled-coil region spans residues 207–254 (TQIQRLEAAGESLQKEIRRKEILLQEKLKKTEEGLRRMQKEKKQAIFQ). Disordered stretches follow at residues 264-316 (LPRR…LSDY) and 352-379 (LGST…EPEL). Residues 286–298 (FRSEVFSRNRGED) are compositionally biased toward basic and acidic residues. The segment covering 301-312 (CDQAQENPSPRQ) has biased composition (polar residues). The span at 358–374 (ESSRSGTPGSSGSSSST) shows a compositional bias: low complexity. C2HC/C3H-type zinc fingers lie at residues 378-407 (ELAK…MQGS) and 489-518 (DYVQ…IKNR). Positions 382, 385, 397, 401, 493, 496, 508, and 512 each coordinate Zn(2+). Positions 507–527 (RHIPKCKTIKNRPPPPRRHDS) are disordered.

The protein belongs to the ZC2HC1 family. Zn(2+) serves as cofactor.

This Mus musculus (Mouse) protein is Zinc finger C2HC domain-containing protein 1C (Zc2hc1c).